The primary structure comprises 896 residues: Phosphatidate phosphatase LPIN2 (896 aa).

Positions 1-108 (MNYVGQLAGQ…LPAYLATSPI (108 aa)) are N-LIP. S106 carries the post-translational modification Phosphoserine. The interval 120-208 (TPLVKSGGDE…SSNASLKEEE (89 aa)) is disordered. The span at 152-162 (VKKKKRRRKKY) shows a compositional bias: basic residues. Positions 153–158 (KKKKRR) match the Nuclear localization signal motif. A phosphoserine mark is found at S174, S186, S187, S243, and S303. Disordered stretches follow at residues 370 to 405 (AEAP…DIYL) and 420 to 459 (FPKS…TECL). The span at 387 to 396 (KKKGVHKRSQ) shows a compositional bias: basic residues. Positions 426-448 (EPGSRQWPESDTLSGSQSPQSVG) are enriched in polar residues. S566 carries the post-translational modification Phosphoserine. Residues 569 to 579 (KQLPESKEGKS) are compositionally biased toward basic and acidic residues. The interval 569-636 (KQLPESKEGK…LSHGSTTSYK (68 aa)) is disordered. Acidic residues predominate over residues 604–617 (SSSDEGSQELEESI). The segment at 635–837 (YKKSLRLSSD…RIFTVNPKGE (203 aa)) is C-LIP. The DXDXT motif signature appears at 689 to 693 (DIDGT). The LXXIL motif signature appears at 700 to 704 (LGQIL).

It belongs to the lipin family. Mg(2+) serves as cofactor. Expressed in liver, lung, kidney, placenta, spleen, thymus, lymph node, prostate, testes, small intestine, and colon.

It localises to the nucleus. It is found in the cytoplasm. The protein resides in the cytosol. The protein localises to the endoplasmic reticulum membrane. It catalyses the reaction a 1,2-diacyl-sn-glycero-3-phosphate + H2O = a 1,2-diacyl-sn-glycerol + phosphate. Inhibited by N-ethylmaleimide. In terms of biological role, acts as a magnesium-dependent phosphatidate phosphatase enzyme which catalyzes the conversion of phosphatidic acid to diacylglycerol during triglyceride, phosphatidylcholine and phosphatidylethanolamine biosynthesis in the endoplasmic reticulum membrane. Plays important roles in controlling the metabolism of fatty acids at different levels. Also acts as a nuclear transcriptional coactivator for PPARGC1A to modulate lipid metabolism. This Homo sapiens (Human) protein is Phosphatidate phosphatase LPIN2.